A 443-amino-acid chain; its full sequence is Intermediate filament protein ifd-2 (443 aa).

The interval 1–58 (MTDPLNPTRLQNHPALARIIESGRTNLPTGITTSGALSAYAQNAAAIIRDNREREKVE) is head. Residues 55-405 (EKVEIADLNN…KLMENAEHLR (351 aa)) enclose the IF rod domain. The tract at residues 59–90 (IADLNNRLARYVEKVRFLEAQNRVLENDIGVF) is coil 1A. Residues 91–104 (RNAAHTHSERIAVY) form a linker 1 region. The interval 105-239 (FESEKASLFT…SQHDIAIREE (135 aa)) is coil 1B. Positions 240-257 (ISKARRDTTNKNRDYFHN) are linker 12. The interval 258–403 (ELHAAMKEIR…YRKLMENAEH (146 aa)) is coil 2. The segment at 404 to 443 (LRTTVQTHVTYNAPPPPLPQSGPRTTSYHAYGSAYNDSLL) is tail.

Belongs to the intermediate filament family.

The protein localises to the cytoplasm. Functionally, cytoplasmic intermediate filaments provide mechanical strength to cells. Not essential protein. In Caenorhabditis elegans, this protein is Intermediate filament protein ifd-2 (ifd-2).